We begin with the raw amino-acid sequence, 237 residues long: Bax inhibitor 1 (237 aa).

Topologically, residues 1–29 (MNIFDRKINFDALLKFSHITPSTQQHLKK) are cytoplasmic. Lys7 participates in a covalent cross-link: Glycyl lysine isopeptide (Lys-Gly) (interchain with G-Cter in ubiquitin). Residues 30-50 (VYASFALCMFVAAAGAYVHMV) form a helical membrane-spanning segment. The Lumenal portion of the chain corresponds to 51–52 (TH). A helical transmembrane segment spans residues 53–73 (FIQAGLLSALGSLILMIWLMA). The Cytoplasmic portion of the chain corresponds to 74 to 86 (TPHSHETEQKRLG). A helical transmembrane segment spans residues 87-107 (LLAGFAFLTGVGLGPALEFCI). Residues 108-112 (AVNPS) lie on the Lumenal side of the membrane. Residues 113–133 (ILPTAFMGTAMIFTCFTLSAL) form a helical membrane-spanning segment. Residues 134-139 (YARRRS) lie on the Cytoplasmic side of the membrane. Residues 140–160 (YLFLGGILMSALSLLLLSSLG) form a helical membrane-spanning segment. The Lumenal segment spans residues 161 to 166 (NVFFGS). Residues 167–187 (IWLFQANLYVGLVVMCGFVLF) form a helical membrane-spanning segment. At 188-206 (DTQLIIEKAEHGDQDYIWH) the chain is on the cytoplasmic side. An intramembrane region (helical) is located at residues 207-227 (CIDLFLDFITVFRKLMMILAM). Residues 228–237 (NEKDKKKEKK) lie on the Cytoplasmic side of the membrane.

Belongs to the BI1 family. As to quaternary structure, interacts with BCL2 and BCL2L1. Interacts with ERN1. Ubiquitinated by BFAR, leading to proteasomal degradation. As to expression, highly abundant in testis.

The protein localises to the endoplasmic reticulum membrane. Endoplasmic reticulum (ER)-resident protein that confers cellular protection as an anti-apoptotic protein by limiting multiple stress-inducing pathways surrounding the endoplasmic reticulum and mitochondria. Inhibits the activities of the key sensor for the endoplasmic reticulum unfolded protein response IRE1alpha/ERN1 both directly and by blocking BAX/BAK binding. Modulates ER calcium homeostasis by acting as a calcium-leak channel. Negatively regulates autophagy and autophagosome formation, especially during periods of nutrient deprivation, and reduces cell survival during starvation. This is Bax inhibitor 1 (TMBIM6) from Homo sapiens (Human).